A 303-amino-acid polypeptide reads, in one-letter code: MKSALPSIFTLVIIAEFIIGNLSNGFIVLINCIDWVSKRELSSVDKLLIILAISRIGLIWEILVSWFLALHYLAIFVSGTGLRIMIFSWIVSNHFNLWLATILSIFYLLKIASFSSPAFLYLKWRVNKVILLILLGTLVFLFLNLIQINMHIKDWLDRYERNTTWNFSMSDFETFSVSVKFTMTMFSLTPFTVAFISFLLLIFSLQKHLQKMQLNYKGHRDPKTKVHTNALKIVISFLLFYASFFLCVLXSWISELYQNTVIYMLCETIGVFYPSSHSFLLILGNAKLRQAFLLVAAKVWAKR.

Residues 1 to 7 (MKSALPS) lie on the Extracellular side of the membrane. The chain crosses the membrane as a helical span at residues 8–28 (IFTLVIIAEFIIGNLSNGFIV). The Cytoplasmic segment spans residues 29-55 (LINCIDWVSKRELSSVDKLLIILAISR). A helical membrane pass occupies residues 56–76 (IGLIWEILVSWFLALHYLAIF). Residues 77–85 (VSGTGLRIM) are Extracellular-facing. A helical transmembrane segment spans residues 86–106 (IFSWIVSNHFNLWLATILSIF). Over 107–128 (YLLKIASFSSPAFLYLKWRVNK) the chain is Cytoplasmic. A helical transmembrane segment spans residues 129-149 (VILLILLGTLVFLFLNLIQIN). Over 150-184 (MHIKDWLDRYERNTTWNFSMSDFETFSVSVKFTMT) the chain is Extracellular. Residues Asn162 and Asn166 are each glycosylated (N-linked (GlcNAc...) asparagine). Residues 185 to 205 (MFSLTPFTVAFISFLLLIFSL) traverse the membrane as a helical segment. At 206-232 (QKHLQKMQLNYKGHRDPKTKVHTNALK) the chain is on the cytoplasmic side. The chain crosses the membrane as a helical span at residues 233–253 (IVISFLLFYASFFLCVLXSWI). Residues 254–261 (SELYQNTV) are Extracellular-facing. The chain crosses the membrane as a helical span at residues 262-282 (IYMLCETIGVFYPSSHSFLLI). Residues 283–303 (LGNAKLRQAFLLVAAKVWAKR) are Cytoplasmic-facing.

This sequence belongs to the G-protein coupled receptor T2R family.

It localises to the membrane. Its function is as follows. Receptor that may play a role in the perception of bitterness and is gustducin-linked. May play a role in sensing the chemical composition of the gastrointestinal content. The activity of this receptor may stimulate alpha gustducin, mediate PLC-beta-2 activation and lead to the gating of TRPM5. The protein is Taste receptor type 2 member 13 (TAS2R13) of Gorilla gorilla gorilla (Western lowland gorilla).